We begin with the raw amino-acid sequence, 503 residues long: Cytochrome P450 3A25 (503 aa).

Cys442 is a binding site for heme.

It belongs to the cytochrome P450 family. It depends on heme as a cofactor.

The protein resides in the endoplasmic reticulum membrane. It localises to the microsome membrane. The enzyme catalyses an organic molecule + reduced [NADPH--hemoprotein reductase] + O2 = an alcohol + oxidized [NADPH--hemoprotein reductase] + H2O + H(+). Cytochromes P450 are a group of heme-thiolate monooxygenases. In liver microsomes, this enzyme is involved in an NADPH-dependent electron transport pathway. It oxidizes a variety of structurally unrelated compounds, including steroids, fatty acids, and xenobiotics. The sequence is that of Cytochrome P450 3A25 (Cyp3a25) from Mus musculus (Mouse).